The sequence spans 254 residues: Probable pectate lyase E (254 aa).

Residues Met-1–Ala-17 form the signal peptide. The N-linked (GlcNAc...) asparagine glycan is linked to Asn-175. Residues Asp-228–Cys-254 are disordered.

The protein belongs to the polysaccharide lyase 3 family. Requires Ca(2+) as cofactor.

The protein resides in the secreted. The enzyme catalyses Eliminative cleavage of (1-&gt;4)-alpha-D-galacturonan to give oligosaccharides with 4-deoxy-alpha-D-galact-4-enuronosyl groups at their non-reducing ends.. Functionally, pectinolytic enzyme consist of four classes of enzymes: pectin lyase, polygalacturonase, pectin methylesterase and rhamnogalacturonase. Among pectinolytic enzymes, pectin lyase is the most important in depolymerization of pectin, since it cleaves internal glycosidic bonds of highly methylated pectins. Favors pectate, the anion, over pectin, the methyl ester. This chain is Probable pectate lyase E (plyE), found in Aspergillus fumigatus (strain ATCC MYA-4609 / CBS 101355 / FGSC A1100 / Af293) (Neosartorya fumigata).